Reading from the N-terminus, the 756-residue chain is MDPVAVHSCHLLQQLREQRIQGLLCDCMLVVRGVCFKAHKNVLAAFSQYFRSLFQNSSSQKNDVFHLDVTNVSGIGQILDFMYTSRLDLNQDNIQVMLDTAQCLQVQNVLNLCHTFLKSAPAAQLPGLPCAGGFSLQSVALDGTCAVSEHYPPPSLQECPVEGPQAKVPAEVNARAPSANFSRPTEVSKPDAAGGSCPELPCKQPNHYYKLRTLYSKQYYKQTACPSQVPATQQPLTRSASTDLAAADSQPPVEGRPAVLETPEHLPSTFVAPPVRNSGNDSEADPLSEPPAKQMRLKKAMHLKKLNFLKSQQSAECTSHPEPDNGLARREESAAKEDAVERAGSQTAEEKGRGELGPESSREEELPGAPASWEDPSQALQPQKQYACELCGKPFKHPSNLELHKRSHTGEKPFECNICGKHFSQAGNLQTHLRRHSGEKPYICEICGKRFAASGDVQRHIIIHSGEKPHLCDTCGRGFSNFSNLKEHKKTHTADKVFTCDECGKSFNMQRKLVKHRVRHTGERPYSCPACGKCFGGSGDLRRHVRTHTGEKPYSCEVCSKCFTRSAVLRRHKRMHGRADARSPVVLGELSRPIEPSDLDRSQSSDSFSQDVSVTLMPVSVKLPVQPVESSVAGFDGHCSGSYCKLRSMLRPPGMSDQDRLSLEPSKLAKPPELQSQPQAYAYSDVEPSAGVEQPQADGMAVSRSSLATLDNHCTEPLGSRAPSVTYRNSEGQFFSSMTLWGLAMKTLQNEHELEQ.

Residues 25-91 (CDCMLVVRGV…MYTSRLDLNQ (67 aa)) enclose the BTB domain. 3 disordered regions span residues 176–197 (APSA…GGSC), 226–290 (PSQV…LSEP), and 311–379 (SQQS…PSQA). Residues 226–242 (PSQVPATQQPLTRSAST) show a composition bias toward polar residues. Basic and acidic residues-rich tracts occupy residues 319–341 (SHPE…DAVE) and 348–365 (AEEK…REEE). 7 consecutive C2H2-type zinc fingers follow at residues 386 to 408 (YACE…KRSH), 414 to 436 (FECN…LRRH), 442 to 464 (YICE…IIIH), 470 to 492 (HLCD…KKTH), 498 to 520 (FTCD…RVRH), 526 to 548 (YSCP…VRTH), and 554 to 576 (YSCE…KRMH).

Belongs to the krueppel C2H2-type zinc-finger protein family. As to quaternary structure, interacts with EP300, KAT5/Tip60 and ZBTB17. The interaction with EP300 is direct and leads to synergistic induction of CDKN1A. On the CDKN1A promoter, forms a complex with ZBTB17; this interaction leads to additive CDKN1A transactivation. The interaction with ZBTB17 may block ZBTB17 repressor activity. Widely expressed, with highest levels in white adipose tissue and kidney, intermediate levels in brain, liver and heart, and lowest levels in spleen, brown adipose tissue and muscle.

Its subcellular location is the cytoplasm. It is found in the nucleus. Its function is as follows. Transcription factor. Inhibits cell proliferation by activating either CDKN1A/p21 transcription or RB1 transcription. The protein is Zinc finger and BTB domain-containing protein 49 (Zbtb49) of Mus musculus (Mouse).